The sequence spans 102 residues: Acid shock protein (102 aa).

Residues 1–21 (MKKVLALVVAAAMGLSSAAFA) form the signal peptide. Positions 22-41 (AETATTPAPTATTTKAAPAK) are enriched in low complexity. A propeptide spanning residues 22–58 (AETATTPAPTATTTKAAPAKTTHHKKQHKAAPAQKAQ) is cleaved from the precursor. Residues 22–102 (AETATTPAPT…PAKPAAQPAA (81 aa)) are disordered. Over residues 80-90 (AAKKHARKHSH) the composition is skewed to basic residues. Over residues 91–102 (QQPAKPAAQPAA) the composition is skewed to low complexity.

This sequence belongs to the Asr family. Proteolytic processing gives rise to the active protein.

The protein localises to the periplasm. Functionally, required for growth and/or survival at acidic conditions. This Escherichia coli O127:H6 (strain E2348/69 / EPEC) protein is Acid shock protein.